A 109-amino-acid polypeptide reads, in one-letter code: Large ribosomal subunit protein uL22 (109 aa).

It belongs to the universal ribosomal protein uL22 family. Part of the 50S ribosomal subunit.

In terms of biological role, this protein binds specifically to 23S rRNA; its binding is stimulated by other ribosomal proteins, e.g. L4, L17, and L20. It is important during the early stages of 50S assembly. It makes multiple contacts with different domains of the 23S rRNA in the assembled 50S subunit and ribosome. Its function is as follows. The globular domain of the protein is located near the polypeptide exit tunnel on the outside of the subunit, while an extended beta-hairpin is found that lines the wall of the exit tunnel in the center of the 70S ribosome. In Psychrobacter sp. (strain PRwf-1), this protein is Large ribosomal subunit protein uL22.